Here is a 553-residue protein sequence, read N- to C-terminus: Cytochrome P450 monooxygenase alnD (553 aa).

The helical transmembrane segment at 351–371 threads the bilayer; that stretch reads LVGAGFVTSSAFLSWLIYSLV. Position 493 (Cys-493) interacts with heme. Asn-518 carries N-linked (GlcNAc...) asparagine glycosylation.

Belongs to the cytochrome P450 family. It depends on heme as a cofactor.

Its subcellular location is the membrane. Its pathway is polyketide biosynthesis. In terms of biological role, cytochrome P450 monooxygenase; part of the gene cluster that mediates the biosynthesis of asperlin, a polyketide showing anti-inflammatory, antitumor and antibiotic activities. The first step of the asperlin biosynthesis is the production of the intermediate 2,4,6-octatrienoic acid by the highly redusing polyketide synthase alnA with cleavage of the PKS product by the esterase alnB. 2,4,6-octatrienoic acid is further converted to asperlin via several steps involving the remaining enzymes from the cluster. This chain is Cytochrome P450 monooxygenase alnD, found in Emericella nidulans (strain FGSC A4 / ATCC 38163 / CBS 112.46 / NRRL 194 / M139) (Aspergillus nidulans).